The primary structure comprises 250 residues: UPF0758 protein RPB_0700 (250 aa).

The disordered stretch occupies residues 1-27; that stretch reads MVDPISNAAPPMPADSSERLDPPGFAE. An MPN domain is found at 128–250; that stretch reads VLSSWSAVID…HASLKGLKLF (123 aa). Zn(2+)-binding residues include histidine 199, histidine 201, and aspartate 212. The short motif at 199–212 is the JAMM motif element; it reads HNHPSGDPTPSQAD.

Belongs to the UPF0758 family.

In Rhodopseudomonas palustris (strain HaA2), this protein is UPF0758 protein RPB_0700.